The sequence spans 152 residues: UPF0225 protein YchJ (152 aa).

Belongs to the UPF0225 family.

The polypeptide is UPF0225 protein YchJ (Shigella boydii serotype 18 (strain CDC 3083-94 / BS512)).